Reading from the N-terminus, the 157-residue chain is uncharacterized protein (157 aa).

Residues 6 to 157 (HDELFQAIQQ…AFFNLWIKYM (152 aa)) enclose the HTH marR-type domain. A DNA-binding region (H-T-H motif) is located at residues 66-89 (NSFLASRLHISKAAVSKAVHALLK).

The protein resides in the cytoplasm. This is an uncharacterized protein from Bacillus subtilis (strain 168).